The following is a 172-amino-acid chain: Protein PLASTID REDOX INSENSITIVE 2, chloroplastic (172 aa).

A chloroplast-targeting transit peptide spans 1–54; sequence MAARLWAAAVAPATLNPPLLTLSASSSPSSSRLRRSVLGRLRSRAPRPADFVCR.

The protein resides in the plastid. It localises to the chloroplast stroma. The protein localises to the chloroplast nucleoid. Required for the activity of the plastid-encoded RNA polymerase (PEP) and full expression of genes transcribed by PEP. The sequence is that of Protein PLASTID REDOX INSENSITIVE 2, chloroplastic from Oryza sativa subsp. japonica (Rice).